A 375-amino-acid chain; its full sequence is Serpin B5 (375 aa).

N-linked (GlcNAc...) asparagine glycosylation is found at Asn99, Asn133, Asn155, Asn188, and Asn361.

It belongs to the serpin family. Ov-serpin subfamily. Interacts with IRF6.

It localises to the secreted. The protein resides in the extracellular space. Tumor suppressor. It blocks the growth, invasion, and metastatic properties of mammary tumors. As it does not undergo the S (stressed) to R (relaxed) conformational transition characteristic of active serpins, it exhibits no serine protease inhibitory activity. In Plecturocebus moloch (Dusky titi monkey), this protein is Serpin B5 (SERPINB5).